Here is a 927-residue protein sequence, read N- to C-terminus: Calmodulin-binding transcription activator CBT (927 aa).

Positions 26–152 form a DNA-binding region, CG-1; that stretch reads YEKLVAEAAA…YRQTAEENAM (127 aa). The tract at residues 70–96 is necessary and sufficient for nuclear localization; it reads LYDRKVVRNFRKDGHNWKKKKDGRTVQ. Positions 72–79 match the Nuclear localization signal motif; sequence DRKVVRNF. Residues 609-638 form an ANK repeat; that stretch reads SGWTALHWAAYHGRERMVATLLSAGANPSL. 2 IQ domains span residues 757-786 and 799-828; these read EIVA…IQSH and MRRQ…SVGI. The calmodulin-binding stretch occupies residues 826–845; it reads VGIVEKAILRWRKKRKGLRG. A necessary and sufficient for nuclear localization region spans residues 830–851; the sequence is EKAILRWRKKRKGLRGIASGMP. The region spanning 882–911 is the IQ 3 domain; that stretch reads FNRSVVRVQALFRSYKAQQEYRRMKIAHEE.

Belongs to the CAMTA family.

The protein resides in the nucleus. Transcriptional activation activity is strongly reduced by calmodulin. Transcription activator that binds calmodulin in a calcium-dependent manner in vitro. Binds to the DNA consensus sequence 5'-T[AC]CG[CT]GT[GT][GT][GT][GT]T[GT]CG-3'. In Oryza sativa subsp. japonica (Rice), this protein is Calmodulin-binding transcription activator CBT.